A 205-amino-acid polypeptide reads, in one-letter code: Dephospho-CoA kinase (205 aa).

The 198-residue stretch at L7–T204 folds into the DPCK domain. Position 15-20 (G15–A20) interacts with ATP.

Belongs to the CoaE family.

Its subcellular location is the cytoplasm. The catalysed reaction is 3'-dephospho-CoA + ATP = ADP + CoA + H(+). Its pathway is cofactor biosynthesis; coenzyme A biosynthesis; CoA from (R)-pantothenate: step 5/5. Its function is as follows. Catalyzes the phosphorylation of the 3'-hydroxyl group of dephosphocoenzyme A to form coenzyme A. This chain is Dephospho-CoA kinase, found in Aromatoleum aromaticum (strain DSM 19018 / LMG 30748 / EbN1) (Azoarcus sp. (strain EbN1)).